Here is a 549-residue protein sequence, read N- to C-terminus: 65-kDa microtubule-associated protein 9 (549 aa).

Coiled coils occupy residues 36–123 (IEIE…ERKI), 160–199 (SLRKLEELHRELYTLQEQKRNRVKQIQDNIRTLESLCSVL), and 459–492 (GNRLLSMLEEYTELREEKEQERRRKRDLKKHQGQ). Residues 474 to 549 (EEKEQERRRK…SFSTPLSRHG (76 aa)) form a disordered region. Over residues 481–490 (RRKRDLKKHQ) the composition is skewed to basic residues. Ser501 and Ser546 each carry phosphoserine. Positions 514-549 (VSTNKRFVSSPHTPQTDSPHSAKSNQSFSTPLSRHG) are enriched in polar residues.

Belongs to the MAP65/ASE1 family. As to quaternary structure, forms dimer. Binds to microtubules (MT).

Its subcellular location is the nucleus. It localises to the cytoplasm. The protein resides in the cytoskeleton. It is found in the spindle pole. In Arabidopsis thaliana (Mouse-ear cress), this protein is 65-kDa microtubule-associated protein 9 (MAP65-9).